The sequence spans 690 residues: MPRVHAIEDYRNFGIMAHIDAGKTTTTERILYYTGKSHKIGEVHEGAATMDWMEQEQERGITITSAATTAFWNGKRLNIIDTPGHVDFTIEVERSLRVLDGAVCVLDSNQGVEPQTETVWRQGDKYRVPRIVFANKMDKTGADFFKCLQDIIDRLGAKPVAIQLPIGSENNFKGLIDLVRMKAVVWSDESLGAKFEDTEIPEDLLEQAKEYREKMIEAAVELDDDAMAAYLDGTEPEEAVLKRLIRKAVLTGAFYPVLCGSAFKNKGVQPLLDAVVDYLPSPVDVPAIKGIDEDGNEVTRHADDKEPLSLLAFKIMDDPFVGTITFCRIYSGVLQSGTGVVNSTREKKERIGRMLLMHANNREDIKEAYAGDIVALAGLKEARTGDTLCDPQKQVILEKMEFPEPVIEIAIEPKSKADQEKLGVALAKLAAEDPSFRVSTDLESGQTILKGMGELHLDIKVDILRRTYKVDANIGAPQVAFRERITKRAEVDYTHKKQTGGTGQFAAVKFIVEPNEPGGGYVFESKIVGGAVPKEYIPGVEKGIESVLSSGVVAGFPVVDVKVSLIDGKYHDVDSSALAFEIASRAAFREALQKGKSVLLEPIMKVECVTPEDYTGSVIGDLNSRRGQIQGQDMRGNANVINAMVPLMNMFGYVNNLRSMSQGRATFTMQFDHYAEAPANVSAEVQKKFA.

In terms of domain architecture, tr-type G spans 8–283; sequence EDYRNFGIMA…AVVDYLPSPV (276 aa). GTP contacts are provided by residues 17–24, 81–85, and 135–138; these read AHIDAGKT, DTPGH, and NKMD.

This sequence belongs to the TRAFAC class translation factor GTPase superfamily. Classic translation factor GTPase family. EF-G/EF-2 subfamily.

Its subcellular location is the cytoplasm. Catalyzes the GTP-dependent ribosomal translocation step during translation elongation. During this step, the ribosome changes from the pre-translocational (PRE) to the post-translocational (POST) state as the newly formed A-site-bound peptidyl-tRNA and P-site-bound deacylated tRNA move to the P and E sites, respectively. Catalyzes the coordinated movement of the two tRNA molecules, the mRNA and conformational changes in the ribosome. This Rhodopseudomonas palustris (strain BisA53) protein is Elongation factor G.